The sequence spans 166 residues: MANVRPSVVFKQQEVNHMADILKNSKSFIVFEYHGLTAANILALRNVLHSSNSKLYVLKNNITARAFEKAGVSGFENQLTGPNAVAVAMDDEIAAIKAVNDVAKEFDFVKIKGAYLENKFADTHKIDQLAAIPGREGLYSMLLSCFTAPLRNVMYGLKAVAEQKGE.

This sequence belongs to the universal ribosomal protein uL10 family. In terms of assembly, part of the ribosomal stalk of the 50S ribosomal subunit. The N-terminus interacts with L11 and the large rRNA to form the base of the stalk. The C-terminus forms an elongated spine to which L12 dimers bind in a sequential fashion forming a multimeric L10(L12)X complex.

Functionally, forms part of the ribosomal stalk, playing a central role in the interaction of the ribosome with GTP-bound translation factors. This chain is Large ribosomal subunit protein uL10, found in Ureaplasma parvum serovar 3 (strain ATCC 27815 / 27 / NCTC 11736).